Consider the following 648-residue polypeptide: Zinc finger protein grt1 (648 aa).

The zn(2)-C6 fungal-type DNA-binding region spans 13–42 (ACENCRKRKVKCSGGDVCFECQKYNENCVY).

In terms of assembly, monomer.

The protein localises to the nucleus. In terms of biological role, may be involved in the facilitation of anaphase progression in mitosis. This is Zinc finger protein grt1 (grt1) from Schizosaccharomyces pombe (strain 972 / ATCC 24843) (Fission yeast).